Here is a 115-residue protein sequence, read N- to C-terminus: Na(+)/H(+) antiporter subunit C1 (115 aa).

3 consecutive transmembrane segments (helical) span residues 1–21, 28–48, and 72–92; these read MEIL…YLIL, IIIG…TMGG, and LILT…VLAF.

It belongs to the CPA3 antiporters (TC 2.A.63) subunit C family. May form a heterooligomeric complex that consists of seven subunits: mnhA1, mnhB1, mnhC1, mnhD1, mnhE1, mnhF1 and mnhG1.

It localises to the cell membrane. Its function is as follows. Mnh complex is a Na(+)/H(+) antiporter involved in Na(+) excretion. The sequence is that of Na(+)/H(+) antiporter subunit C1 (mnhC1) from Staphylococcus saprophyticus subsp. saprophyticus (strain ATCC 15305 / DSM 20229 / NCIMB 8711 / NCTC 7292 / S-41).